A 468-amino-acid polypeptide reads, in one-letter code: Na(+)/H(+) antiporter NhaA 2 (468 aa).

Transmembrane regions (helical) follow at residues 31–51, 82–102, 118–138, 147–167, 176–196, 199–219, 226–246, 321–341, 353–373, 393–413, and 422–442; these read FLHVQAASGIVLLIATAVALA, LHFWINDGLMTIFFFVVGLEI, VLPVAAALGGMLFPALIYLAL, GWGVPMATDIAFAVGALALLG, VLLLALAIIDDIGAILVIAVF, SSISVTGFGLVAVGIAGVLAL, SPVVYAAAGVVIWAGLLSAGV, PWVAYGIMPLFALANAGVSLG, LLLGVVFGLTMGKPLGIMVAC, VLVVGCVAGIGFTMAIFVAGL, and GVAKLAVLLGSLISALVAMAV.

It belongs to the NhaA Na(+)/H(+) (TC 2.A.33) antiporter family.

Its subcellular location is the cell inner membrane. The enzyme catalyses Na(+)(in) + 2 H(+)(out) = Na(+)(out) + 2 H(+)(in). In terms of biological role, na(+)/H(+) antiporter that extrudes sodium in exchange for external protons. This Sorangium cellulosum (strain So ce56) (Polyangium cellulosum (strain So ce56)) protein is Na(+)/H(+) antiporter NhaA 2.